The chain runs to 161 residues: Cyclic pyranopterin monophosphate synthase (161 aa).

Substrate is bound by residues 78–80 and 116–117; these read MCH and ME. D131 is a catalytic residue.

Belongs to the MoaC family. In terms of assembly, homohexamer; trimer of dimers.

It catalyses the reaction (8S)-3',8-cyclo-7,8-dihydroguanosine 5'-triphosphate = cyclic pyranopterin phosphate + diphosphate. The protein operates within cofactor biosynthesis; molybdopterin biosynthesis. Catalyzes the conversion of (8S)-3',8-cyclo-7,8-dihydroguanosine 5'-triphosphate to cyclic pyranopterin monophosphate (cPMP). This Nitratidesulfovibrio vulgaris (strain ATCC 29579 / DSM 644 / CCUG 34227 / NCIMB 8303 / VKM B-1760 / Hildenborough) (Desulfovibrio vulgaris) protein is Cyclic pyranopterin monophosphate synthase.